A 161-amino-acid chain; its full sequence is Allophycocyanin alpha chain 2 (161 aa).

N71 bears the N4-methylasparagine mark. C81 is a binding site for (2R,3E)-phycocyanobilin.

This sequence belongs to the phycobiliprotein family. Component of the phycobilisome. Heterodimer of an alpha and a beta chain. Post-translationally, contains one covalently linked bilin chromophore.

Its subcellular location is the cellular thylakoid membrane. Light-harvesting photosynthetic bile pigment-protein from the phycobiliprotein complex. Allophycocyanin has a maximum absorption at approximately 650 nanometers. The sequence is that of Allophycocyanin alpha chain 2 (apcA2) from Microchaete diplosiphon (Fremyella diplosiphon).